Consider the following 324-residue polypeptide: NADH-ubiquinone oxidoreductase chain 1 (324 aa).

Transmembrane regions (helical) follow at residues 3–23 (LLFMYLLPLLYIAPILLAVAF), 73–93 (LLFILAPTLALALAMIMWTPF), 106–126 (ILFILAISSLTVYTILGSGWA), 151–171 (ALIILCSVLLAGGFTLSAFAI), 175–195 (FTWFILPLWPMFLMWFVSTLA), 226–246 (LFFLAEYANILMMNTLSTIIF), 255–275 (TLTTSLLMTKASILSLCFLWV), and 295–315 (FLPLTLALVILYVSMPISLLF).

This sequence belongs to the complex I subunit 1 family.

It localises to the mitochondrion inner membrane. The catalysed reaction is a ubiquinone + NADH + 5 H(+)(in) = a ubiquinol + NAD(+) + 4 H(+)(out). In terms of biological role, core subunit of the mitochondrial membrane respiratory chain NADH dehydrogenase (Complex I) that is believed to belong to the minimal assembly required for catalysis. Complex I functions in the transfer of electrons from NADH to the respiratory chain. The immediate electron acceptor for the enzyme is believed to be ubiquinone. In Aquarana catesbeiana (American bullfrog), this protein is NADH-ubiquinone oxidoreductase chain 1 (MT-ND1).